A 178-amino-acid chain; its full sequence is Small ribosomal subunit protein uS5 (178 aa).

The 64-residue stretch at 15–78 (FEEKIIEIRR…SAAKRNIVEV (64 aa)) folds into the S5 DRBM domain.

It belongs to the universal ribosomal protein uS5 family. In terms of assembly, part of the 30S ribosomal subunit. Contacts proteins S4 and S8.

With S4 and S12 plays an important role in translational accuracy. In terms of biological role, located at the back of the 30S subunit body where it stabilizes the conformation of the head with respect to the body. The polypeptide is Small ribosomal subunit protein uS5 (Thermotoga maritima (strain ATCC 43589 / DSM 3109 / JCM 10099 / NBRC 100826 / MSB8)).